The chain runs to 692 residues: Elongation factor G (692 aa).

Residues 8–283 enclose the tr-type G domain; that stretch reads NRIRNIGIAA…AVIDYLPAPT (276 aa). GTP contacts are provided by residues 17–24, 81–85, and 135–138; these read AHIDAGKT, DTPGH, and NKMD.

Belongs to the TRAFAC class translation factor GTPase superfamily. Classic translation factor GTPase family. EF-G/EF-2 subfamily.

The protein resides in the cytoplasm. Catalyzes the GTP-dependent ribosomal translocation step during translation elongation. During this step, the ribosome changes from the pre-translocational (PRE) to the post-translocational (POST) state as the newly formed A-site-bound peptidyl-tRNA and P-site-bound deacylated tRNA move to the P and E sites, respectively. Catalyzes the coordinated movement of the two tRNA molecules, the mRNA and conformational changes in the ribosome. This is Elongation factor G from Helicobacter pylori (strain Shi470).